The sequence spans 1007 residues: Probable beta-galactosidase A (1007 aa).

Residues 1–18 (MRLLPVWTAALLAAQAAG) form the signal peptide. Substrate contacts are provided by Y96, N140, A141, and E142. The N-linked (GlcNAc...) asparagine glycan is linked to N156. N199 lines the substrate pocket. E200 functions as the Proton donor in the catalytic mechanism. A disulfide bridge links C205 with C206. Residue Y260 participates in substrate binding. C266 and C315 form a disulfide bridge. E298 (nucleophile) is an active-site residue. Y364 serves as a coordination point for substrate. N-linked (GlcNAc...) asparagine glycosylation is found at N405, N422, N621, N740, N775, and N914.

Belongs to the glycosyl hydrolase 35 family.

It is found in the secreted. The enzyme catalyses Hydrolysis of terminal non-reducing beta-D-galactose residues in beta-D-galactosides.. Functionally, cleaves beta-linked terminal galactosyl residues from gangliosides, glycoproteins, and glycosaminoglycans. The protein is Probable beta-galactosidase A (lacA) of Emericella nidulans (strain FGSC A4 / ATCC 38163 / CBS 112.46 / NRRL 194 / M139) (Aspergillus nidulans).